A 235-amino-acid chain; its full sequence is Superoxide dismutase [Mn] 3.1, mitochondrial (235 aa).

A mitochondrion-targeting transit peptide spans 1-31 (MALRTLASKKVLSFPFGGAGRPLAAAASARG). Residues histidine 59, histidine 107, aspartate 196, and histidine 200 each coordinate Mn(2+).

This sequence belongs to the iron/manganese superoxide dismutase family. As to quaternary structure, homotetramer. Mn(2+) serves as cofactor.

The protein localises to the mitochondrion matrix. It carries out the reaction 2 superoxide + 2 H(+) = H2O2 + O2. Destroys superoxide anion radicals which are normally produced within the cells and which are toxic to biological systems. The protein is Superoxide dismutase [Mn] 3.1, mitochondrial (SODA.4) of Zea mays (Maize).